We begin with the raw amino-acid sequence, 229 residues long: Sugar fermentation stimulation protein homolog (229 aa).

This sequence belongs to the SfsA family.

The chain is Sugar fermentation stimulation protein homolog from Caldanaerobacter subterraneus subsp. tengcongensis (strain DSM 15242 / JCM 11007 / NBRC 100824 / MB4) (Thermoanaerobacter tengcongensis).